The following is a 365-amino-acid chain: P43 5S RNA-binding protein (365 aa).

C2H2-type zinc fingers lie at residues 15 to 39 (FRCPAAGCKAVYRKEGKLRDHMAGH), 45 to 69 (WKCGKKDCGKMFARKRQIQKHMKRH), 75 to 100 (HSCPTAGCKMTFSTKKSLSRHKLYKH), 106 to 130 (LKCSVPGCKRSFRKKRALRIHVSEH), 136 to 160 (SVCDVPGCGWKSTSAAKLAAHHRRH), 163 to 187 (YRCSYEDCQTVSPTWTALQTHLKKH), 191 to 213 (LQCAACKKPFKKASALRRHKATH), 220 to 245 (LPCPRQDCDKIFSTVFNLTHHLRKVH), and 251 to 275 (HRCPHSNCTRSFAMRESLVRHLVVH).

As to quaternary structure, the 42S RNP particle comprises four subunits each of which contains one molecule of 5S RNA, three molecules of tRNA, two molecules of p50 (EF1-alpha) and one molecule of the 5S RNA binding protein 43.

In terms of biological role, p43 is a 5S RNA binding protein which is a major constituent of oocytes and comprises part of a 42S ribonucleoprotein storage particle. This chain is P43 5S RNA-binding protein, found in Xenopus borealis (Kenyan clawed frog).